The sequence spans 1140 residues: Kinesin-like protein KIN-14O (1140 aa).

Residues 1-12 (MLESEFQREHAF) show a composition bias toward basic and acidic residues. Disordered stretches follow at residues 1-37 (MLES…ADDD), 50-81 (NPAE…DEDS), 161-217 (SPGS…GGHK), and 323-347 (ASGT…KEED). A compositionally biased stretch (low complexity) spans 161–179 (SPGSSHGGSTPRSPFSPSS). A compositionally biased stretch (basic and acidic residues) spans 180-193 (PRERHNKGLADSRF). Residues 197-209 (LPNSSALDPSSPG) are compositionally biased toward polar residues. Residues 327 to 546 (SEENETEKSK…KAKEMEEKSE (220 aa)) adopt a coiled-coil conformation. Basic and acidic residues predominate over residues 332-347 (TEKSKLEEKKKDKEED). One can recognise a Kinesin motor domain in the interval 632–952 (NIRVYCRVRP…LKFAERVSGV (321 aa)). 716–723 (GQTGSGKT) is an ATP binding site. Positions 1002–1018 (LGQSDDFNSEAGDSQLS) are enriched in polar residues. Disordered regions lie at residues 1002-1021 (LGQS…SIED) and 1028-1140 (DYTR…KRWS). The segment covering 1066 to 1078 (EGRKPLKISDKPK) has biased composition (basic and acidic residues). Positions 1099-1130 (TMRTTNIAKATSALLSPSSQGMKKTGSASNFL) are enriched in polar residues.

Belongs to the TRAFAC class myosin-kinesin ATPase superfamily. Kinesin family. KIN-14 subfamily.

The protein is Kinesin-like protein KIN-14O of Arabidopsis thaliana (Mouse-ear cress).